The primary structure comprises 155 residues: Small ribosomal subunit protein uS7 (155 aa).

It belongs to the universal ribosomal protein uS7 family. In terms of assembly, part of the 30S ribosomal subunit. Contacts proteins S9 and S11.

In terms of biological role, one of the primary rRNA binding proteins, it binds directly to 16S rRNA where it nucleates assembly of the head domain of the 30S subunit. Is located at the subunit interface close to the decoding center, probably blocks exit of the E-site tRNA. This Mycoplasma mycoides subsp. mycoides SC (strain CCUG 32753 / NCTC 10114 / PG1) protein is Small ribosomal subunit protein uS7.